The primary structure comprises 158 residues: MTCLYPGTFDPITNGHLDVIKRALKIFDEVIVAIAKSEHKKPCYDLEKRKELALLATQNLKNVKIIAFDNLLVDLAKELKVNTIIRGLRAVSDFEYELQIGYANHALWEDMETIYLMPSLKHAFISSSIVRSIVAHGGDVSSLVPKEILPFLKDQSCM.

Threonine 8 is a binding site for substrate. Residues 8–9 (TF) and histidine 16 each bind ATP. The substrate site is built by lysine 40, leucine 72, and arginine 86. ATP-binding positions include 87–89 (GLR), glutamate 97, and 122–128 (HAFISSS).

The protein belongs to the bacterial CoaD family. As to quaternary structure, homohexamer. Requires Mg(2+) as cofactor.

It is found in the cytoplasm. The enzyme catalyses (R)-4'-phosphopantetheine + ATP + H(+) = 3'-dephospho-CoA + diphosphate. It participates in cofactor biosynthesis; coenzyme A biosynthesis; CoA from (R)-pantothenate: step 4/5. Its function is as follows. Reversibly transfers an adenylyl group from ATP to 4'-phosphopantetheine, yielding dephospho-CoA (dPCoA) and pyrophosphate. The chain is Phosphopantetheine adenylyltransferase from Campylobacter jejuni subsp. jejuni serotype O:6 (strain 81116 / NCTC 11828).